A 4555-amino-acid polypeptide reads, in one-letter code: MSVTMGHCMGTKPPSCIILLLLKLFATVSQGLPGTGPLGFHFTHSTYNATVYENSAARTYVNSQSRMGITLIDLSWDIKYRIVSGDEEGFFKAEEVIIADFCFLRIRTKGGNSAILNREIQDNYLLIIKGSVRGEDLEAWTKVNIQVLDMNDLRPLFSPTTYSVTIAESTPLRTSVAQVTATDADIGSNGEFYYYFKNKVDLFSVHPTSGVISLSGRLNYDEKNRYDLEILAVDRGMKLYGNNGVSSTAKLYVHIERINEHAPIIHVVSHTPFSLDKEPTYAVVTVDDLDEGANGEIESLSIVDGDPLEQFFLAKEGKWLNEYKVKERRQVDWESFSYGYNLTIQAKDKGSPQKFSELKTVHIANPRRDNTPVRFEKDVYEVSISEFSPPGVLVAIVKVSPEPLDVEYKLLPGKDSDYFKINPRSGLIVTAQPLNTVKKEVYKLEVSDKEGDAKAQVTIGIEDANDHTPEFQEALYETFVNESVRVGTNVLTVSASDKDKGENGYITYSIASLNLLPFAINQFTGVISTTEELDFESSPETYRFIVRASDWGSPYRHESEVNVTIRVGNVNDNSPLFEKVACQGVISYDFPVGGHITAISAIDIDELELVKYKIISGNELGFFYLNPDSGVLQLKKSLMNSGIKNGNFALRITATDGENFADPMAINISVLHGKVSSKSFSCRETRVAQKLAEKLLIKAKANGKLNLEDGFLDFYSINRQGPHFDKSFPSDVAVKEDMLVGTNILKIKAYDADSGFNGKVLFTISDGNTDSCFNIDMETGQLKVLMPMDREHTDLYVLNITIYDLGKPQKSSWRLLTVNVEDANDNNPVFLQDSYSVSILESSSIGTEIIQVEARDKDLGSNGEVMYSVLTDTHQFIINSSTGIVYIADQLDRESKANYSLKIEARDKAESGQQLFSVVTLKIFLDDVNDCSPAFIPSSYSVKVLEDLPVGTVIAWLETQDPDLGLGGQVRYSLVNDYNGRFEVDKASGAIRLSKELDYEKQQFYNLTVRAKDKGRPVSLSSVSFVEVEVVDVNENLHTPYFPDFAVVGSVKENSRIGTSVLQVTAHDEDSGRDGEIQYSIRDGSGLGRFNIDDESGVITAADSLDRETTASYWLTVYATDRGVVPLYSTIEVYIEVEDVNDNAPLTSEPIYYPVVMENSPKDVSVIQIQAEDPDSGSNEKLTYRITSGNPQNFFAINIKTGLITTTSRKLDREQQAEHFLEVTVTDGGSSPKQSTIWVVVQVLDENDNRPQFPEKVYQIKLPERDRKKRGEPIYRAFAFDKDEGPNAEISYSIVDGNDDGKFFIDPKTGMVSSRKQFTAGSYDILTIKAVDNGRPQKSSTARLHIEWIKKPPPSPIPLTFDEPFYNFTVMESDKVTEIVGVVSVQPANTPLWFDIVGGNFDSSFDAEKGVGTIVIAKPLDAEQRSVYNMSVEVTDGTNIAVTQVFIKVLDNNDNGPEFSQPHYDVTISEDVLPDTEILQIEATDRDEKHKLSYTIHSSIDAVSMRKFRMDPSTGVLYTAERLDHEAQDKHILNIMVRDQEFPYRRNLARVIVNVEDANDHSPYFTNPLYEASVFESAALGSVVLQVTALDKDKGENAELIYSIEAGNTGNTFKIEPVLGIITISKEPDMAAMGQFVLSVKVTDQGSPPMSATAIVRISISMSDNSHPKFTHKDYQAEVNENVDIGTSVILISAISQSTLIYEVKDGNINGVFTINPYSGVITTRRALDYEHTSSYQLIIQATNMAGMASNATISVQIVDENDNPPVFLFSQYSGSLSEAAPINSIVRSLDNSPLVIRATDADSNQNALLVYQIVESTAKKFFTVDSSTGAIRTIANLDHEAIAHFHFHVHVRDSGNPQLTAESPVEVNIEVTDVNDNPPVFTQAVFETVLLLPTYIGVEVLKVSATDPDSEVPPELTYSLMEGSVDNFLMDPNTGVLTIKNNNLSKDHYMLIVRVSDGKFYSTAMVTVMVKEAMDSGLHFTQSFYSTSISENSTNITKVAIVNAVGNRLNEPLKYSILNPGNKFKIKSTSGVIQTTGVPFDREEQELYELVVEASRELDHLRVARVVVRVNIEDVNDNSPVFVGLPYYAAVQVDAEPGTLIYRVTAIDKDKGANGEVTYVLQDDYGHFEINPNSGNVILREAFNSDLSNIDYGVTILAKDGGNPSLSTFVELPITIVNKAMPVFDKPFYTASINEDITMNTPILSINATSPEGQGIIYLIIDGDPFQQFNIDFDTGVLKVISPLDYEVTSVYKLTVRASDALTGARAEVTVDLLVDDINDNPPVFDQPTYNTTLSESSLIGTPVLQLVSTDADSGNNKLVRYQIVQDTYNSTDYFHIDSSSGLILTARMLDHELVQHCTLKVTATDNGFPSLSSEVLVQIYISDVNDNPPVFNQLIYESYVSELAPRGHFVTCVQASDADSSDLDRLEYSILSGNDRASFLMDSKSGVLTLSSHRKQRMEPLYSLNVSVSDGLFTSTAQVHIRVLGANLYSPAFSQSTYVAEVRENAASGTKVIHVRATDGDPGTYGQVSYSIINDFAKDRFLIDSNGQIITTERLDRENPLEGDISIYLRALDGGGRTTFCTVRVIVVDENDNAPQFMTVEYRASVRADVGRGHLVTQVQALDPDDGANSRITYSLYSEASVSVADLLEIDPDNGWMVTKGNFNQLRNTVLSFFVKAVDGGIPVRHSLIPVYIHVLPPETFLPSFTQSQYSFTITEDTSIGSTVDTLRILPNQSVRFSMVNGERPENNKEGVFIIEQETGAIKLDKRLDHEVSPAFHFKVAATIPLDKVDIVFTVDVDVKVLDLNDNKPVFETSTYETIIMEGMPVGTKLAQVRAIDMDWGANGQVTYSLHSDSHLEKVIEAFNIDSNTGWISTLKDLDHETDPAFSFFVVASDLGEAFSLSSMALVSVKVTDINDNAPVFAHEVYRGNVKESDPPGEVVAVLSTLDKDTSNINRQVSYHITGGNPRGQFALGMVQSEWKVYVKRPLDREEQDIYFLNITASDGLFVTQAMVEVTVSDVNDNSPVCDQVAYSASLPEDIPSNKIILKVSAKDADIGSNGDIRYSLYGSGNNEFFLDPESGELKTLAVLDRERVPVYNLIARATDGGGRFCSSSVLLLLEDVNDNPPVFSSNHYTACVYENTATKALLTRVQAMDPDVGINRKVVYSLEDSASGVFSIDSSSGVIVLEQPLDREQQSSYNISVRATDQSPGQSLSSLASVTITVLDINDNPPVFERRDYLVTVPEDTSLGTQVLSVFATSKDIGTNAEITYLIRSGNEQGKFSINPKTGGISVLEALDYETCRRFYLVVEAKDGGTPALSTAATVSIDLTDVNDNPPRFSQDVYSAVISEDALEGDSVILLIAEDVDSKPNGQIRFSIVGGDRDNEFAVDPILGLVKVKKKLDRERVSGYSLLIQAVDSGIPAMSSTTTVNIDISDVNDNSPVFTPANYTAVIQENKPVGTSILQLVVTDRDSFHNGPPFSFSILSGNEDEEFMLDSHGILRSAVVFRHMESPEYLLCIQAKDSGKPQQVSHTYIRVRVIEESTHKPTAIPLEIFIVTMEDDFPGGVIGKIHATDQDMYDVLTFALKSEQKSLFKVNSHDGKIIALGGLDSGKYVLNVSVSDGRFQVPIDVVVHVEQLVHEMLQNTVTIRFEDVSPEDFVGLHMHGFRRILRNAVLTQKQDSLRIISIQPVVGTNQLDMLFAVEMHSSEFYKPAYLIQKLSNARRHLENVMHIAAILEKNCSGLDCQEQHCEQGLSLDSHALMTYSTARISFVCPRFYRNVRCTCNGGVCPGSNDPCVEKPCPEDMQCVGYEASRRPFLCQCPPGKLGECSGHTSLSFAGNSYIKYRLSENSKEEDFKLALRLRTLQSNGIIMYTRANPCMILKIVEGKLWFQLDCGSGPGILGISSRAVNDGSWHSVFLELNRNFTSLALDDSYVERRRAPLYFQTLSTDSAIFFGALVQADNVRSLTDTRVTQVLGGFQGCLDSVVLNHYELPLQNKRSSFAEVVGLTELKLGCVLYPDACQRSPCLHGGSCSSLPSGGYQCSCLSQFTGTNCESEITACFPNPCRNGGSCDPIGNTFVCSCKAGLTGVTCEDDVDECEREECENGGSCVNLFGSFFCNCTPGYVGQYCGLRPVVVPNIQAGHSYVGKEELIGIAVVLFVIFTLIVLFIVFRKKVFRKNYSRNNITLVQDPATAALLHKSNGIPFRSLRAGDGRNVYQEVGPPQVPVRPMAYTPCFQSDSRSNLDKGLDVLGGEPQEMSTFHPESPRILTARRGVVVCSVAPNLPAVSPCRSDCDSIRKNGWDTGSENKGTEDTGEVTCFTNSNKGSNSEVQSLSSFQSDSGDDNAYHWDTSDWMPGARLSDIEEMPNYESQDGGAAHQGSTRELESDYYLGGYDIDSEYPPPHEEEFLSRDQLPPPLPEDFPDQYEALPPSQPTSLTSTMSPDCRRRPRFHPSQYLPPHPLPGETDLGGPSSSCDFSTFAVNMNQGTEVMAPTDSVSLSLHNSRGTSSSEMSARCGFDDSEVAMSDYESAGELSLTNLHIPFVETQQQTQV.

The signal sequence occupies residues 1–31 (MSVTMGHCMGTKPPSCIILLLLKLFATVSQG). Residues 32-4153 (LPGTGPLGFH…AGHSYVGKEE (4122 aa)) are Extracellular-facing. Cadherin domains are found at residues 43–157 (THST…RPLF), 158–262 (SPTT…NEHA), 263–374 (PIIH…TPVR), 376–471 (EKDV…TPEF), 472–577 (QEAL…SPLF), 578–680 (EKVA…SKSF), 726–830 (KSFP…NPVF), 831–935 (LQDS…SPAF), 936–1042 (IPSS…TPYF), 1043–1147 (PDFA…APLT), 1148–1253 (SEPI…RPQF), 1254–1358 (PEKV…SPIP), 1362–1459 (DEPF…GPEF), 1460–1565 (SQPH…SPYF), 1566–1768 (TNPL…PPVF), 1769–1882 (LFSQ…PPVF), 1883–1985 (TQAV…TQSF), 1982–2083 (TQSF…SPVF), 2084–2185 (VGLP…MPVF), 2186–2286 (DKPF…PPVF), 2287–2393 (DQPT…PPVF), 2394–2495 (NQLI…SPAF), 2496–2599 (SQST…APQF), 2600–2707 (MTVE…LPSF), 2708–2813 (TQSQ…KPVF), 2814–2923 (ETST…APVF), 2924–3028 (AHEV…SPVC), 3029–3130 (DQVA…PPVF), 3131–3235 (SSNH…PPVF), 3236–3340 (ERRD…PPRF), 3341–3445 (SQDV…SPVF), 3446–3550 (TPAN…KPTA), and 3551–3660 (IPLE…PEDF). Asn-48 carries N-linked (GlcNAc...) asparagine glycosylation. N-linked (GlcNAc...) asparagine glycosylation occurs at Asn-341. N-linked (GlcNAc...) asparagine glycosylation is found at Asn-481, Asn-562, Asn-667, Asn-799, Asn-879, Asn-898, and Asn-1006. Residues Asn-1367 and Asn-1429 are each glycosylated (N-linked (GlcNAc...) asparagine). Asn-1751 carries an N-linked (GlcNAc...) asparagine glycan. N-linked (GlcNAc...) asparagine glycosylation is found at Asn-1944, Asn-1993, and Asn-1996. Asn-2208, Asn-2292, Asn-2331, and Asn-2467 each carry an N-linked (GlcNAc...) asparagine glycan. Asn-2734 carries an N-linked (GlcNAc...) asparagine glycan. N-linked (GlcNAc...) asparagine glycosylation occurs at Asn-3000. N-linked (GlcNAc...) asparagine glycosylation is present at Asn-3201. Asn-3449, Asn-3618, and Asn-3741 each carry an N-linked (GlcNAc...) asparagine glycan. The region spanning 3794-3832 (SNDPCVEKPCPEDMQCVGYEASRRPFLCQCPPGKLGECS) is the EGF-like 1 domain. Intrachain disulfides connect Cys-3798/Cys-3809, Cys-3803/Cys-3821, and Cys-3823/Cys-3831. The Laminin G-like domain maps to 3834–4017 (HTSLSFAGNS…VGLTELKLGC (184 aa)). Residue Asn-3926 is glycosylated (N-linked (GlcNAc...) asparagine). 10 disulfide bridges follow: Cys-3984-Cys-4017, Cys-4024-Cys-4035, Cys-4029-Cys-4045, Cys-4047-Cys-4056, Cys-4063-Cys-4074, Cys-4068-Cys-4083, Cys-4085-Cys-4094, Cys-4101-Cys-4112, Cys-4106-Cys-4121, and Cys-4123-Cys-4132. EGF-like domains are found at residues 4020 to 4057 (YPDA…TNCE) and 4059 to 4095 (EITA…VTCE). The 37-residue stretch at 4097-4133 (DVDECEREECENGGSCVNLFGSFFCNCTPGYVGQYCG) folds into the EGF-like 4; calcium-binding domain. Residues 4154–4174 (LIGIAVVLFVIFTLIVLFIVF) form a helical membrane-spanning segment. Residues 4175–4555 (RKKVFRKNYS…FVETQQQTQV (381 aa)) lie on the Cytoplasmic side of the membrane. 2 disordered regions span residues 4300–4353 (IRKN…YHWD) and 4395–4474 (GGYD…LGGP). Polar residues predominate over residues 4322 to 4343 (CFTNSNKGSNSEVQSLSSFQSD). 2 positions are modified to omega-N-methylarginine: Arg-4508 and Arg-4518.

In terms of tissue distribution, restricted to the nervous system, mainly in brain. In brain, it is highly expressed in the olfactory bulb and retina. In the developing olfactory bulb, it localizes along the dendrites of these cells as well as in their axons to some extent. In retina, it cocentrates in the inner plexiform layer throughout development (at protein level).

Its subcellular location is the membrane. In terms of biological role, may play a role in the interactions between neurites derived from specific subsets of neurons during development. The protein is Protocadherin Fat 3 (Fat3) of Mus musculus (Mouse).